The following is a 475-amino-acid chain: MVSTTKSTGSVTQIIGPVLDIAFPNGQLPKVFNALKVQSTDGTITCEVQQLLGDNKVRAVSMSSTEGLKRGVEVVDTGAPISVPVGTNTLGRIFNVLGEPVDNLGPVSSESTLPIHRPAPAFTKLETKPSIFETGIKVVDLLAPYRRGGKIGLFGGAGVGKTVLIMELINNIAKAHGGVSVFGGVGERTREGNDLYMEMKESKVINEDNLKESKVALVYGQMNEPPGARMRVGLTALTMAEYFRDINKQDVLLFIDNIFRFVQAGSEVSALLGRMPSAVGYQPTLATEMGALQERITSTTEGSITSIQAVYVPADDLTDPAPATTFAHLDATTVLSRNLAAKGIYPAVDPLDSTSTMLQPGIVGTDHYSTAQEVKSTLQRYKELQDIIAILGLDELSEEDRQTVSRARKIERFLSQPFFVAEVFTGSPGKYVSLEDAIKGFQMILKGELDDLPEQAFYLVGDIDEAIQKADSMKD.

155–162 (GGAGVGKT) contributes to the ATP binding site.

The protein belongs to the ATPase alpha/beta chains family. F-type ATPases have 2 components, CF(1) - the catalytic core - and CF(0) - the membrane proton channel. CF(1) has five subunits: alpha(3), beta(3), gamma(1), delta(1), epsilon(1). CF(0) has four main subunits: a(1), b(1), b'(1) and c(9-12).

It localises to the plastid. The protein localises to the chloroplast thylakoid membrane. It carries out the reaction ATP + H2O + 4 H(+)(in) = ADP + phosphate + 5 H(+)(out). In terms of biological role, produces ATP from ADP in the presence of a proton gradient across the membrane. The catalytic sites are hosted primarily by the beta subunits. The sequence is that of ATP synthase subunit beta, chloroplastic from Porphyra purpurea (Red seaweed).